A 1825-amino-acid polypeptide reads, in one-letter code: Proteasome activator complex subunit 4B (1825 aa).

6 HEAT repeats span residues 458–502, 981–1020, 1162–1200, 1336–1374, 1618–1656, and 1662–1700; these read PEGP…LVDC, NFCCRDITPRVLEFLEPTRTDVTQQQFKGALYCLLGNHCG, YPLPAPAVFFFVQSLNHDALVVRKMAIAAVAGILKQLKR, DAFLPVLKPHMERLANDSHESTQRCVAEIIAGLIRGSKH, PEQIPMVLAVLHEIAGSSSWHARYSVLTYLQTMVFYNLF, and EQCVQGVRALVIRLLEDEQLEVREMAATTLSGFLQCNFL. The bromodomain-like (BRDL) stretch occupies residues 1632 to 1720; it reads AGSSSWHARY…EALCKTRLPK (89 aa).

It belongs to the BLM10 family. Homodimer. Interacts with the 20S and 26S proteasomes.

Its subcellular location is the cytoplasm. The protein resides in the cytosol. It is found in the nucleus. The protein localises to the nucleus speckle. Its function is as follows. Associated component of the proteasome that specifically recognizes acetylated histones and promotes ATP- and ubiquitin-independent degradation of core histones during DNA damage response. Recognizes and binds acetylated histones via its bromodomain-like (BRDL) region and activates the proteasome by opening the gated channel for substrate entry. Binds to the core proteasome via its C-terminus, which occupies the same binding sites as the proteasomal ATPases, opening the closed structure of the proteasome via an active gating mechanism. involved in DNA damage response in somatic cells: binds to acetylated histones and promotes degradation of histones. The protein is Proteasome activator complex subunit 4B (psme4b) of Danio rerio (Zebrafish).